We begin with the raw amino-acid sequence, 225 residues long: Platelet-derived growth factor subunit B (225 aa).

A signal peptide spans 1-12 (LPLCCYLRLVSA). Positions 13–73 (EGDPIPEELY…ESESSSRGRR (61 aa)) are cleaved as a propeptide — removed in mature form. A glycan (N-linked (GlcNAc...) asparagine) is linked at Asn55. Disulfide bonds link Cys89–Cys133, Cys122–Cys170, and Cys126–Cys172. A propeptide spans 183 to 225 (RSPGTSREHRAKTPQTRVTVRTVRIRRPPKGKHRKFKHTHDKK) (removed in mature form).

It belongs to the PDGF/VEGF growth factor family. Antiparallel homodimer; disulfide-linked. Antiparallel heterodimer with PDGFA; disulfide-linked. The PDGFB homodimer interacts with PDGFRA and PDGFRB homodimers, and with heterodimers formed by PDGFRA and PDGFRB. The heterodimer composed of PDGFA and PDGFB interacts with PDGFRB homodimers, and with heterodimers formed by PDGFRA and PDGFRB. Interacts with XLKD1. Interacts with LRP1. Interacts with SORL1 (via the N-terminal ectodomain). Interacts with CD82; this interaction inhibits PDGFB-mediated signaling pathway. In terms of tissue distribution, expressed in a distinct subpopulation of smooth muscle cells in injured arteries.

It localises to the secreted. In terms of biological role, growth factor that plays an essential role in the regulation of embryonic development, cell proliferation, cell migration, survival and chemotaxis. Potent mitogen for cells of mesenchymal origin. Required for normal proliferation and recruitment of pericytes and vascular smooth muscle cells in the central nervous system, skin, lung, heart and placenta. Required for normal blood vessel development, and for normal development of kidney glomeruli. Plays an important role in wound healing. Signaling is modulated by the formation of heterodimers with PDGFA. The protein is Platelet-derived growth factor subunit B (Pdgfb) of Rattus norvegicus (Rat).